Consider the following 57-residue polypeptide: uncharacterized protein (57 aa).

This is an uncharacterized protein from Bacillus subtilis (strain 168).